Reading from the N-terminus, the 205-residue chain is MTKRAEAKYKIDRRMGQNIWGRSKSPVNRREYGPGQHGQRRKGKLSDFGTQLKAKQKLKGYYGNISEKQFRKYYAEAIRMKGDSGDNLIGLLERRLDAVVYRAKFVPTVFASRQFINHGHIKVNGRRVNIASYQVRVGDVIEVKEASRQLTLVLEASQLAERDVPEYYDVDHGKMSAKVTRIPLPNEVPYPVIMEPNLVIEFYSR.

Positions 20–46 (WGRSKSPVNRREYGPGQHGQRRKGKLS) are disordered. Residues 94–157 (RRLDAVVYRA…RQLTLVLEAS (64 aa)) form the S4 RNA-binding domain.

The protein belongs to the universal ribosomal protein uS4 family. Part of the 30S ribosomal subunit. Contacts protein S5. The interaction surface between S4 and S5 is involved in control of translational fidelity.

Its function is as follows. One of the primary rRNA binding proteins, it binds directly to 16S rRNA where it nucleates assembly of the body of the 30S subunit. In terms of biological role, with S5 and S12 plays an important role in translational accuracy. In Beijerinckia indica subsp. indica (strain ATCC 9039 / DSM 1715 / NCIMB 8712), this protein is Small ribosomal subunit protein uS4.